Here is a 573-residue protein sequence, read N- to C-terminus: DNA damage-binding protein CMR1 (573 aa).

Residues 27-94 are disordered; sequence DSLNDSISRE…EMEKAEERKR (68 aa). Residues 72-152 adopt a coiled-coil conformation; sequence TMEDSEEDKQ…EEIKKEEDST (81 aa). Over residues 79–94 the composition is skewed to basic and acidic residues; the sequence is DKQMREEMEKAEERKR. 7 WD repeats span residues 218-259, 268-308, 319-357, 361-401, 418-456, 495-538, and 542-573; these read ITQQ…DDET, PHGK…STEV, DYPLGVSDINVADNNLLYMTTLSGNFYRYDMRSPFKQGE, LHDK…QKNS, HSRLSVSCVDWNHDNHLVCNGYDDTVNVFDLSGSDKLPL, GRWV…LCHL, and DRMTAVPAVSMLHPTENWCVGGSASGKVYLFE.

This sequence belongs to the WD repeat DDB2/WDR76 family.

DNA-binding protein that binds to both single- and double-stranded DNA. Binds preferentially to UV-damaged DNA. May be involved in DNA-metabolic processes. The polypeptide is DNA damage-binding protein CMR1 (Meyerozyma guilliermondii (strain ATCC 6260 / CBS 566 / DSM 6381 / JCM 1539 / NBRC 10279 / NRRL Y-324) (Yeast)).